A 198-amino-acid chain; its full sequence is Photosystem I assembly protein Ycf4 (198 aa).

The next 2 membrane-spanning stretches (helical) occupy residues 35-57 (WFYN…SSYI) and 70-92 (IIFF…FSIN).

The protein belongs to the Ycf4 family.

It localises to the plastid. It is found in the chloroplast thylakoid membrane. Its function is as follows. Seems to be required for the assembly of the photosystem I complex. The chain is Photosystem I assembly protein Ycf4 from Euglena gracilis.